We begin with the raw amino-acid sequence, 76 residues long: Protein RALF-like 26 (76 aa).

Positions 1–22 (MKAWMIILLVICVAVVVEQSEA) are cleaved as a signal peptide. An intrachain disulfide couples C37 to C46. The N-linked (GlcNAc...) asparagine glycan is linked to N61. C66 and C72 are joined by a disulfide.

The protein belongs to the plant rapid alkalinization factor (RALF) family.

It localises to the secreted. In terms of biological role, cell signaling peptide that may regulate plant stress, growth, and development. Mediates a rapid alkalinization of extracellular space by mediating a transient increase in the cytoplasmic Ca(2+) concentration leading to a calcium-dependent signaling events through a cell surface receptor and a concomitant activation of some intracellular mitogen-activated protein kinases. This Arabidopsis thaliana (Mouse-ear cress) protein is Protein RALF-like 26 (RALFL26).